The following is a 219-amino-acid chain: tRNA (guanine-N(7)-)-methyltransferase (219 aa).

The S-adenosyl-L-methionine site is built by glutamate 46, glutamate 71, asparagine 100, and aspartate 122. Aspartate 122 is a catalytic residue. Substrate is bound by residues lysine 126, aspartate 158, and 199-202 (TEYE).

Belongs to the class I-like SAM-binding methyltransferase superfamily. TrmB family.

It carries out the reaction guanosine(46) in tRNA + S-adenosyl-L-methionine = N(7)-methylguanosine(46) in tRNA + S-adenosyl-L-homocysteine. Its pathway is tRNA modification; N(7)-methylguanine-tRNA biosynthesis. Catalyzes the formation of N(7)-methylguanine at position 46 (m7G46) in tRNA. This Leuconostoc citreum (strain KM20) protein is tRNA (guanine-N(7)-)-methyltransferase.